The sequence spans 384 residues: Cyclohexane-1-carbonyl-CoA dehydrogenase (384 aa).

This sequence belongs to the acyl-CoA dehydrogenase family. In terms of assembly, homotetramer. FAD serves as cofactor.

The enzyme catalyses cyclohexane-1-carbonyl-CoA + oxidized [electron-transfer flavoprotein] + H(+) = cyclohex-1-ene-1-carbonyl-CoA + reduced [electron-transfer flavoprotein]. Functionally, mediates the conversion of cyclohexane-1-carbonyl-CoA (ChCoA) into cyclohex-1-ene-1-carbonyl-CoA in biosynthesis of cyclohexane-1-carboxylate, a by-product produced during fermentation of benzoate and crotonate to acetate. The sequence is that of Cyclohexane-1-carbonyl-CoA dehydrogenase from Syntrophus aciditrophicus (strain SB).